We begin with the raw amino-acid sequence, 178 residues long: Relaxin-like protein SQ10 (178 aa).

An N-terminal signal peptide occupies residues 1 to 20 (MPALLFYLLGFCLLQGQVTG). 3 disulfides stabilise this stretch: C34-C165, C46-C178, and C164-C169. Residues 54 to 150 (ESPSPENPFL…SSASESNTFS (97 aa)) constitute a propeptide, connecting peptide.

The protein belongs to the insulin family. As to quaternary structure, heterodimer of a B chain and an A chain linked by two disulfide bonds.

It is found in the secreted. In Oryctolagus cuniculus (Rabbit), this protein is Relaxin-like protein SQ10.